The sequence spans 226 residues: tRNA (guanine-N(7)-)-methyltransferase (226 aa).

3 residues coordinate S-adenosyl-L-methionine: Asp59, Glu84, and Asp111. Asp169 lines the substrate pocket.

Belongs to the class I-like SAM-binding methyltransferase superfamily. TrmB family.

It catalyses the reaction guanosine(46) in tRNA + S-adenosyl-L-methionine = N(7)-methylguanosine(46) in tRNA + S-adenosyl-L-homocysteine. It functions in the pathway tRNA modification; N(7)-methylguanine-tRNA biosynthesis. Catalyzes the formation of N(7)-methylguanine at position 46 (m7G46) in tRNA. The polypeptide is tRNA (guanine-N(7)-)-methyltransferase (Chloroherpeton thalassium (strain ATCC 35110 / GB-78)).